The chain runs to 118 residues: Basic phospholipase A2 acanthin-2 (118 aa).

Intrachain disulfides connect Cys11-Cys71, Cys27-Cys117, Cys29-Cys45, Cys44-Cys98, Cys51-Cys91, Cys60-Cys84, and Cys78-Cys89. The Ca(2+) site is built by Tyr28, Gly30, and Gly32. His48 is a catalytic residue. Asp49 is a Ca(2+) binding site. Residue Asp92 is part of the active site.

It depends on Ca(2+) as a cofactor. Expressed by the venom gland.

Its subcellular location is the secreted. It catalyses the reaction a 1,2-diacyl-sn-glycero-3-phosphocholine + H2O = a 1-acyl-sn-glycero-3-phosphocholine + a fatty acid + H(+). In terms of biological role, snake venom phospholipase A2 (PLA2) that potently inhibits ADP-(IC(50)=12 nM) and collagen-induced (IC(50)=4 nM) platelet aggregation when tested on human whole blood. PLA2 catalyzes the calcium-dependent hydrolysis of the 2-acyl groups in 3-sn-phosphoglycerides. The polypeptide is Basic phospholipase A2 acanthin-2 (Acanthophis antarcticus (Common death adder)).